A 152-amino-acid chain; its full sequence is Superoxide dismutase [Cu-Zn] (152 aa).

Cu cation-binding residues include His-45, His-47, and His-62. A disulfide bridge connects residues Cys-56 and Cys-145. Residues His-62, His-70, His-79, and Asp-82 each coordinate Zn(2+). A Cu cation-binding site is contributed by His-119.

The protein belongs to the Cu-Zn superoxide dismutase family. In terms of assembly, homodimer. Requires Cu cation as cofactor. Zn(2+) serves as cofactor.

The protein resides in the cytoplasm. It carries out the reaction 2 superoxide + 2 H(+) = H2O2 + O2. Destroys radicals which are normally produced within the cells and which are toxic to biological systems. The polypeptide is Superoxide dismutase [Cu-Zn] (SODCC) (Capsicum annuum (Capsicum pepper)).